The chain runs to 452 residues: MASTTSIRQFSTSGSVKGLCAPGMGFSRMSSVRIGGACRAPSLLGGGSCSNMSVTSSRFSAGLGGSYGGGYTCSLGGGFGSSFGVSDALLGGSEKETMQNLNDRLATYLDRVRALEEANTDLEVKIREWYKKQGPGPARDYSPYFKTIEDLRNKILAATIDNASIVLQIDNARLAADDFRTKYETELNLRMSVEADINGLRRVLDELTLARADLEMQIETLKEELAYLKKNHEEEMNALRGQVGGDVNVEMDAAPGVDLSRILNEMRDQYEKMAEKNRKDAEEWFFTKTEELNREVATNTEALQSSRTEITELRRSVQNLEIELQSQLSMKASLENSLAETEARYGAQLAQLQGLISSMEQQLCELRCDMERQNHEYQVLLDVKTRLEQEIATYRRLLEGEDAHLATQYSSSLASQASREGTVTSRQVRTIVEEVQDGKVVSSREQVHRSTH.

The head stretch occupies residues threonine 4–serine 93. Coiled-coil stretches lie at residues serine 93–lysine 132 and asparagine 188–threonine 407. Positions glutamate 94–tryptophan 129 are coil 1A. The IF rod domain occupies glutamate 94–leucine 405. The interval tyrosine 130–threonine 147 is linker 1. Residues isoleucine 148–leucine 239 are coil 1B. The tract at residues arginine 240–isoleucine 262 is linker 12. The interval leucine 263–glutamate 401 is coil 2. A tail region spans residues aspartate 402 to histidine 452.

The protein belongs to the intermediate filament family. Heterodimer of a type I and a type II keratin. Colocalizes with KRT8/KRT18 filament network.

The protein localises to the cytoplasm. In Rattus norvegicus (Rat), this protein is Keratin, type I cytoskeletal 42.